Consider the following 706-residue polypeptide: ABC transporter D family member 2, chloroplastic (706 aa).

The transit peptide at 1 to 44 (MILMITAPVCPPHLLLRHSSLLRHESSIGNFHRKKNPRFRTVSC) directs the protein to the chloroplast. Ser45 is subject to N-acetylserine. Helical transmembrane passes span 88–108 (LAAV…FNFL), 124–144 (FTKQ…FFVL), 200–222 (TALS…SNIL), 237–257 (SFGG…LNFL), and 326–346 (ILPV…FGVI). Positions 88 to 372 (LAAVFALTLA…VVYQFQAISS (285 aa)) constitute an ABC transmembrane type-1 domain. The ABC transporter domain maps to 430 to 697 (LEIEELTLQT…DAQDSLYGRL (268 aa)). 464 to 471 (GPSGSGKT) is a binding site for ATP. Residues 545–569 (TTPGGSNIDGSPPLLIREDGNEKPT) form a disordered region. Basic and acidic residues predominate over residues 560-569 (IREDGNEKPT).

It belongs to the ABC transporter superfamily. ABCD family. Peroxisomal fatty acyl CoA transporter (TC 3.A.1.203) subfamily. In terms of assembly, homodimer or heterodimer.

The protein localises to the membrane. It localises to the plastid. It is found in the chloroplast. This is ABC transporter D family member 2, chloroplastic (ABCC2) from Arabidopsis thaliana (Mouse-ear cress).